We begin with the raw amino-acid sequence, 296 residues long: Acetyl-coenzyme A carboxylase carboxyl transferase subunit beta (296 aa).

A CoA carboxyltransferase N-terminal domain is found at V25–E294. Zn(2+)-binding residues include C29, C32, C48, and C51. The C4-type zinc finger occupies C29–C51.

The protein belongs to the AccD/PCCB family. Acetyl-CoA carboxylase is a heterohexamer composed of biotin carboxyl carrier protein (AccB), biotin carboxylase (AccC) and two subunits each of ACCase subunit alpha (AccA) and ACCase subunit beta (AccD). Zn(2+) serves as cofactor.

It is found in the cytoplasm. It catalyses the reaction N(6)-carboxybiotinyl-L-lysyl-[protein] + acetyl-CoA = N(6)-biotinyl-L-lysyl-[protein] + malonyl-CoA. Its pathway is lipid metabolism; malonyl-CoA biosynthesis; malonyl-CoA from acetyl-CoA: step 1/1. Component of the acetyl coenzyme A carboxylase (ACC) complex. Biotin carboxylase (BC) catalyzes the carboxylation of biotin on its carrier protein (BCCP) and then the CO(2) group is transferred by the transcarboxylase to acetyl-CoA to form malonyl-CoA. This chain is Acetyl-coenzyme A carboxylase carboxyl transferase subunit beta, found in Haemophilus influenzae (strain 86-028NP).